Reading from the N-terminus, the 461-residue chain is Adenine DNA glycosylase (461 aa).

Catalysis depends on glutamate 69, which acts as the Proton donor/acceptor. The [4Fe-4S] cluster site is built by cysteine 226, cysteine 233, cysteine 236, and cysteine 242. Residues 296-437 enclose the Nudix hydrolase domain; the sequence is QREERALVVI…RAALEIKKRK (142 aa). The Nudix box signature appears at 340–366; it reads FGQESWPKDMDAEFQKSIAQWISNDSR.

It belongs to the Nth/MutY family. As to quaternary structure, monomer. The cofactor is [4Fe-4S] cluster.

The enzyme catalyses Hydrolyzes free adenine bases from 7,8-dihydro-8-oxoguanine:adenine mismatched double-stranded DNA, leaving an apurinic site.. Adenine glycosylase active on G-A mispairs. Has glycosylase and nicking activities and is active at A/G and A/GO sites. The sequence is that of Adenine DNA glycosylase (myh1) from Schizosaccharomyces pombe (strain 972 / ATCC 24843) (Fission yeast).